Reading from the N-terminus, the 150-residue chain is 3-hydroxyacyl-[acyl-carrier-protein] dehydratase FabZ (150 aa).

H57 is an active-site residue.

This sequence belongs to the thioester dehydratase family. FabZ subfamily.

The protein localises to the cytoplasm. The enzyme catalyses a (3R)-hydroxyacyl-[ACP] = a (2E)-enoyl-[ACP] + H2O. Functionally, involved in unsaturated fatty acids biosynthesis. Catalyzes the dehydration of short chain beta-hydroxyacyl-ACPs and long chain saturated and unsaturated beta-hydroxyacyl-ACPs. This Actinobacillus succinogenes (strain ATCC 55618 / DSM 22257 / CCUG 43843 / 130Z) protein is 3-hydroxyacyl-[acyl-carrier-protein] dehydratase FabZ.